Here is a 20-residue protein sequence, read N- to C-terminus: Snaclec ophioluxin subunit alpha (20 aa).

C4 and C15 are joined by a disulfide. The C-type lectin domain maps to 11–20; the sequence is YDQHCYRIIN.

The protein belongs to the snaclec family. In terms of assembly, heterodimer of subunits alpha and beta; disulfide-linked. Expressed by the venom gland.

Its subcellular location is the secreted. Functionally, binds to the platelet and collagen receptor glycoprotein VI (GP6) and activates platelet aggregation. The polypeptide is Snaclec ophioluxin subunit alpha (Ophiophagus hannah (King cobra)).